Here is a 695-residue protein sequence, read N- to C-terminus: Pentatricopeptide repeat-containing protein 1, mitochondrial (695 aa).

6 PPR repeats span residues 133–169, 170–204, 205–243, 244–278, 279–315, and 316–352; these read TQYWYFFQCKRLIKEGKLAEALDLFERQMLKEERLQP, LECNYTVLIGGCGRVGYLKKAFRLFNDMKKRDLEP, SDATYTALFNVCAESPWKDSALQSALKLRQQLQARNFQL, NLKTYHALLKVAAKCADLRLCLDVFKEIIQRGHAV, TEETFCFLLVGCIQDKKTGFRQAMQVWRQMLSLGIKP, and SRHGYNLLLEAARDCGLGDPEVASRLLLTSQEETILL. The segment at 391–416 is disordered; that stretch reads QKLEGPPALPEARVTSRTQPEVETTA. PPR repeat units follow at residues 470 to 485, 517 to 551, 552 to 583, and 584 to 618; these read EGFLGKMTEHGLQPDI, DVTFFNTLIRKKSKLGDLEGAKALLPILAKKGIVP, NLRTFCNLAIGCHRPRDGMQLLADMKKSQVSP, and NIHIYSTLINAALKKLDYTYLISILKDMRQNSVPV. The tract at residues 672-695 is disordered; it reads WQEFQNKPVGDQDTTDKAGGLRDG. The segment covering 685–695 has biased composition (basic and acidic residues); sequence TTDKAGGLRDG.

The protein belongs to the PTCD1 family. Associates with mitochondrial leucine tRNAs. Interacts with ELAC2.

The protein localises to the mitochondrion. It is found in the mitochondrion matrix. Its function is as follows. Mitochondrial protein implicated in negative regulation of leucine tRNA levels, as well as negative regulation of mitochondria-encoded proteins and COX activity. Also affects the 3'-processing of mitochondrial tRNAs. In Mus musculus (Mouse), this protein is Pentatricopeptide repeat-containing protein 1, mitochondrial (Ptcd1).